The chain runs to 748 residues: Translation factor GUF1 homolog 1, mitochondrial (748 aa).

The N-terminal 29 residues, 1-29, are a transit peptide targeting the mitochondrion; the sequence is MRVGCCLLLKPIRQRLCTASISSRHIMRW. The 183-residue stretch at 94-276 folds into the tr-type G domain; the sequence is SHIRNFAVVA…AIIERVPPPT (183 aa). Residues 103 to 110, 167 to 171, and 221 to 224 each bind GTP; these read AHVDHGKT, DTPGH, and TKMD.

The protein belongs to the TRAFAC class translation factor GTPase superfamily. Classic translation factor GTPase family. LepA subfamily.

The protein localises to the mitochondrion inner membrane. The catalysed reaction is GTP + H2O = GDP + phosphate + H(+). In terms of biological role, promotes mitochondrial protein synthesis. May act as a fidelity factor of the translation reaction, by catalyzing a one-codon backward translocation of tRNAs on improperly translocated ribosomes. Binds to mitochondrial ribosomes in a GTP-dependent manner. The polypeptide is Translation factor GUF1 homolog 1, mitochondrial (Trypanosoma cruzi (strain CL Brener)).